A 251-amino-acid polypeptide reads, in one-letter code: HTH-type transcriptional regulator UlaR (251 aa).

The 56-residue stretch at glutamate 3 to alanine 58 folds into the HTH deoR-type domain. A DNA-binding region (H-T-H motif) is located at residues valine 20–aspartate 39.

It localises to the cytoplasm. Represses ulaG and the ulaABCDEF operon. This chain is HTH-type transcriptional regulator UlaR, found in Escherichia coli (strain SMS-3-5 / SECEC).